Here is a 298-residue protein sequence, read N- to C-terminus: Triosephosphate isomerase, chloroplastic (298 aa).

The span at 1-18 (MAARRPSPPPASPPPPRP) shows a compositional bias: pro residues. A disordered region spans residues 1–32 (MAARRPSPPPASPPPPRPRSTTTTRTTSSASA). A chloroplast-targeting transit peptide spans 1–43 (MAARRPSPPPASPPPPRPRSTTTTRTTSSASAAPAAAQRLVAM). Low complexity predominate over residues 19–32 (RSTTTTRTTSSASA). The substrate site is built by Asn54 and Lys56. The active-site Electrophile is the His138. The residue at position 186 (Cys186) is a Cysteine derivative. The Proton acceptor role is filled by Glu208.

This sequence belongs to the triosephosphate isomerase family. Homodimer.

Its subcellular location is the plastid. It localises to the chloroplast. It catalyses the reaction D-glyceraldehyde 3-phosphate = dihydroxyacetone phosphate. The protein operates within carbohydrate biosynthesis; Calvin cycle. This is Triosephosphate isomerase, chloroplastic from Secale cereale (Rye).